Here is a 457-residue protein sequence, read N- to C-terminus: tRNA-2-methylthio-N(6)-dimethylallyladenosine synthase (457 aa).

The 116-residue stretch at K18–A133 folds into the MTTase N-terminal domain. [4Fe-4S] cluster is bound by residues C27, C63, C97, C171, C175, and C178. The 234-residue stretch at C157–E390 folds into the Radical SAM core domain. One can recognise a TRAM domain in the interval N393–F456.

Belongs to the methylthiotransferase family. MiaB subfamily. In terms of assembly, monomer. It depends on [4Fe-4S] cluster as a cofactor.

The protein localises to the cytoplasm. It carries out the reaction N(6)-dimethylallyladenosine(37) in tRNA + (sulfur carrier)-SH + AH2 + 2 S-adenosyl-L-methionine = 2-methylsulfanyl-N(6)-dimethylallyladenosine(37) in tRNA + (sulfur carrier)-H + 5'-deoxyadenosine + L-methionine + A + S-adenosyl-L-homocysteine + 2 H(+). Catalyzes the methylthiolation of N6-(dimethylallyl)adenosine (i(6)A), leading to the formation of 2-methylthio-N6-(dimethylallyl)adenosine (ms(2)i(6)A) at position 37 in tRNAs that read codons beginning with uridine. The sequence is that of tRNA-2-methylthio-N(6)-dimethylallyladenosine synthase from Bacteroides fragilis (strain ATCC 25285 / DSM 2151 / CCUG 4856 / JCM 11019 / LMG 10263 / NCTC 9343 / Onslow / VPI 2553 / EN-2).